Here is a 378-residue protein sequence, read N- to C-terminus: Metalloendoproteinase 2-MMP (378 aa).

The N-terminal stretch at 1 to 20 (MRFCVFGFLSLFLIVSPASA) is a signal peptide. The propeptide at 21–154 (WFFPNSTAVP…SRTHLHAVKR (134 aa)) is activation peptide. N-linked (GlcNAc...) asparagine glycosylation is found at Asn-25, Asn-35, Asn-46, Asn-79, and Asn-102. The Cysteine switch motif lies at 118–125 (PRCGNPDV). Zn(2+) is bound at residue Cys-120. N-linked (GlcNAc...) asparagine glycosylation is found at Asn-127, Asn-143, and Asn-203. Zn(2+) is bound at residue His-280. Residue Glu-281 is part of the active site. The Zn(2+) site is built by His-284 and His-290. Residue Asn-330 is glycosylated (N-linked (GlcNAc...) asparagine). A lipid anchor (GPI-anchor amidated serine) is attached at Ser-349. The propeptide at 350–378 (AAWRIDGSSRSTIVSLLLSTVGLVLWFLP) is removed in mature form.

Belongs to the peptidase M10A family. Matrix metalloproteinases (MMPs) subfamily. Zn(2+) serves as cofactor. As to expression, mostly expressed in roots, and, to a lower extent, in flowers, leaves and stems.

Its subcellular location is the cell membrane. With respect to regulation, repressed by acetohydroxamic acid (AHA). Its function is as follows. Matrix metalloproteinases (MMPs) or matrixins may play a role in the degradation and remodeling of the extracellular matrix (ECM) during development or in response to stresses. Required for plant growth, morphogenesis, and development with particular relevance for flowering and senescence. Active on McaPLGLDpaAR-NH(2) (QF24) and myelin basic protein (MBP) and, to some extent, on beta-casein. The chain is Metalloendoproteinase 2-MMP from Arabidopsis thaliana (Mouse-ear cress).